Here is a 614-residue protein sequence, read N- to C-terminus: Laccase 1 (614 aa).

Residues 1–21 form the signal peptide; sequence MSRFARLLLMVVALFFTNAWA. 2 consecutive Plastocyanin-like domains span residues 30–143 and 172–360; these read ITWK…IRPK and YLVV…MRIP. An N-linked (GlcNAc...) asparagine glycan is attached at Asn-75. Cu cation is bound by residues His-79, His-81, His-123, and His-125. N-linked (GlcNAc...) asparagine glycans are attached at residues Asn-257, Asn-280, Asn-445, Asn-469, and Asn-485. The Plastocyanin-like 3 domain occupies 469–599; the sequence is NATRDTENDG…GGMGIAILDG (131 aa). 3 residues coordinate Cu cation: His-507, His-510, and His-512. An N-linked (GlcNAc...) asparagine glycan is attached at Asn-527. Cu cation is bound by residues His-581, Cys-582, His-583, and His-587.

The protein belongs to the multicopper oxidase family. It depends on Cu cation as a cofactor.

It localises to the cell surface. It functions in the pathway pigment biosynthesis. Functionally, laccase; part of the Pks1 gene cluster that mediates the biosynthesis of an anthraquinone derivative pigment that contributes to conidial pigmentation that provides protection from UV radiation, heat and cold stress. The polyketide synthase Pks1 produces 1-acetyl-2,4,6,8-tetrahydroxy-9,10-anthraquinone though condensation of acetyl-CoA with malonyl-CoA. The dehydratase EthD and the laccase Mlac1 further convert the anthraquinone derivative into the final conidial pigment. The chain is Laccase 1 from Metarhizium majus (strain ARSEF 297).